The chain runs to 572 residues: Proline--tRNA ligase (572 aa).

Belongs to the class-II aminoacyl-tRNA synthetase family. ProS type 1 subfamily. In terms of assembly, homodimer.

The protein localises to the cytoplasm. It carries out the reaction tRNA(Pro) + L-proline + ATP = L-prolyl-tRNA(Pro) + AMP + diphosphate. Catalyzes the attachment of proline to tRNA(Pro) in a two-step reaction: proline is first activated by ATP to form Pro-AMP and then transferred to the acceptor end of tRNA(Pro). As ProRS can inadvertently accommodate and process non-cognate amino acids such as alanine and cysteine, to avoid such errors it has two additional distinct editing activities against alanine. One activity is designated as 'pretransfer' editing and involves the tRNA(Pro)-independent hydrolysis of activated Ala-AMP. The other activity is designated 'posttransfer' editing and involves deacylation of mischarged Ala-tRNA(Pro). The misacylated Cys-tRNA(Pro) is not edited by ProRS. This chain is Proline--tRNA ligase, found in Haemophilus influenzae (strain 86-028NP).